The sequence spans 129 residues: Small ribosomal subunit protein uS11 (129 aa).

The protein belongs to the universal ribosomal protein uS11 family. In terms of assembly, part of the 30S ribosomal subunit. Interacts with proteins S7 and S18. Binds to IF-3.

Functionally, located on the platform of the 30S subunit, it bridges several disparate RNA helices of the 16S rRNA. Forms part of the Shine-Dalgarno cleft in the 70S ribosome. The sequence is that of Small ribosomal subunit protein uS11 from Dinoroseobacter shibae (strain DSM 16493 / NCIMB 14021 / DFL 12).